A 391-amino-acid chain; its full sequence is Large ribosomal subunit protein uL3 (391 aa).

Residues 1–10 (MSHRKFEAPR) are compositionally biased toward basic and acidic residues. The tract at residues 1–41 (MSHRKFEAPRHGSLGFRPRRRTRHHRGRCRSFPKDDPSKKP) is disordered. Residues 17–31 (RPRRRTRHHRGRCRS) are compositionally biased toward basic residues.

Belongs to the universal ribosomal protein uL3 family.

The protein resides in the cytoplasm. The L3 protein is a component of the large subunit of cytoplasmic ribosomes. The protein is Large ribosomal subunit protein uL3 (RPL3) of Tetrahymena thermophila.